The chain runs to 442 residues: Putative helicase 161L (442 aa).

The 154-residue stretch at 88 to 241 (IDILEKNHSV…LFPIFFGKEK (154 aa)) folds into the Helicase ATP-binding domain. ATP is bound at residue 101–108 (CFTGFGKT). Residues 194 to 197 (DEVH) carry the DEAH box motif.

The protein belongs to the DEAD box helicase family. DEAH subfamily.

This Invertebrate iridescent virus 6 (IIV-6) protein is Putative helicase 161L.